Reading from the N-terminus, the 791-residue chain is MALSVIRNNHIIFVLKQIGVRTKHRENNNSKYVESFTCDELERYIYSNPDCTLFETLKDEEYYSNVRVFFDVDMDGRLDDKYQATHNFVNIITKFVADYAYNDCKMISNHRDKDKMITDMKSNFSITESTDKEKTSFHLIFFNCYTTLDTLINMRKKLIVLTKESNNRLVKAIDTSVYRHKPSLRIVGTKKDSINIHVHKKTKQNIHFKNYLFTYVDYNEEDCYYFVSEQQHQSPDLLNWKEEYIPFHDAIKKISKAIGNSIINLKDITAENFTVTPLDIYYATPCNLCKKVSHKHPHHLLISNDCIRIYKSGNPNSCKIKTISLEGNKLFSISQQIIDLNVINVSDRGEYLVWLKNVWRMCEDDNNITKLILYMRDHLSSDCTDLLLCPRNRKVIEHNLKDMLIDTIETDTYPEKLQFLNGVYDIKDSIFYQGNDAKKFVCTVSTGYKYEEGINVDDITTELMSILDDIQPKTKENFENRELYEQILSSCLMGTTKQCIFFFYGETATGKSTTKKLLKSVMHNMFLETGQVILTEQMDKGPNPFIANMHLKRVVFCSELPDFSCNTSKKIRSDNIKKLTEPCVVGRSCYSNKINNRNHATIIIDTNYKPVFDKVDNAIMRRIALVNFKTHFTNTKKKVHNSKYDFIKPLNESLDSKIQSNYFRYAFLKILLGWFSKYHVPNLRILPTPDKIPDFKFRLKVESLIIPSNSTHVKYVDKLMKLGYITDDDGIPVLQLNIFQQKLSLHFNVKLYGQDIDSFIMKNKKYMNLADEYMSFIFIEDLNTINEPRNT.

Asp174 is a catalytic residue. The primase stretch occupies residues 346–471 (SDRGEYLVWL…ELMSILDDIQ (126 aa)). One can recognise an SF3 helicase domain in the interval 479–641 (ENRELYEQIL…FTNTKKKVHN (163 aa)). 505-512 (GETATGKS) is an ATP binding site.

This sequence belongs to the poxviridae D5 family. As to quaternary structure, interacts with A20.

Its function is as follows. Primase which may have roles in initiation of DNA replication or lagging-strand synthesis. The sequence is that of Primase D5 from Fowlpox virus (strain NVSL) (FPV).